The following is a 251-amino-acid chain: Triosephosphate isomerase (251 aa).

9–11 lines the substrate pocket; the sequence is NWK. Residue H95 is the Electrophile of the active site. Residue E167 is the Proton acceptor of the active site. Substrate contacts are provided by residues G173, S213, and 234–235; that span reads GG. Phosphoserine is present on S213.

The protein belongs to the triosephosphate isomerase family. In terms of assembly, homodimer.

The protein localises to the cytoplasm. It catalyses the reaction D-glyceraldehyde 3-phosphate = dihydroxyacetone phosphate. Its pathway is carbohydrate biosynthesis; gluconeogenesis. It functions in the pathway carbohydrate degradation; glycolysis; D-glyceraldehyde 3-phosphate from glycerone phosphate: step 1/1. Its function is as follows. Involved in the gluconeogenesis. Catalyzes stereospecifically the conversion of dihydroxyacetone phosphate (DHAP) to D-glyceraldehyde-3-phosphate (G3P). This chain is Triosephosphate isomerase, found in Bacillus mycoides (strain KBAB4) (Bacillus weihenstephanensis).